A 404-amino-acid polypeptide reads, in one-letter code: L-cysteine:1D-myo-inositol 2-amino-2-deoxy-alpha-D-glucopyranoside ligase (404 aa).

Cys-35 is a Zn(2+) binding site. Residues 35–38 (CGIT), Thr-50, and 73–75 (NVT) contribute to the L-cysteinyl-5'-AMP site. A 'HIGH' region motif is present at residues 37–47 (ITPYDATHLGH). The short motif at 178–183 (ERGGDP) is the 'ERGGDP' region element. Trp-219 lines the L-cysteinyl-5'-AMP pocket. Cys-223 is a binding site for Zn(2+). An L-cysteinyl-5'-AMP-binding site is contributed by 241 to 243 (GND). His-248 contributes to the Zn(2+) binding site. Ile-275 contacts L-cysteinyl-5'-AMP. Positions 281 to 285 (KMSKS) match the 'KMSKS' region motif.

The protein belongs to the class-I aminoacyl-tRNA synthetase family. MshC subfamily. As to quaternary structure, monomer. Zn(2+) is required as a cofactor.

The enzyme catalyses 1D-myo-inositol 2-amino-2-deoxy-alpha-D-glucopyranoside + L-cysteine + ATP = 1D-myo-inositol 2-(L-cysteinylamino)-2-deoxy-alpha-D-glucopyranoside + AMP + diphosphate + H(+). Its function is as follows. Catalyzes the ATP-dependent condensation of GlcN-Ins and L-cysteine to form L-Cys-GlcN-Ins. The polypeptide is L-cysteine:1D-myo-inositol 2-amino-2-deoxy-alpha-D-glucopyranoside ligase (Salinispora tropica (strain ATCC BAA-916 / DSM 44818 / JCM 13857 / NBRC 105044 / CNB-440)).